Reading from the N-terminus, the 393-residue chain is Protein TsgA (393 aa).

12 helical membrane passes run 11–31, 51–71, 78–98, 101–121, 134–154, 162–182, 206–226, 245–265, 273–293, 298–318, 332–352, and 361–381; these read WISF…GMVM, FLNA…EIVP, FGFI…SLAL, AAMF…TFLI, LLFT…VAAF, WYWV…LTFG, IGVL…LGFI, ALVS…SFIL, ILTV…TGTQ, WFIL…ITLG, FILT…GPIV, and LLTA…LGFV.

It belongs to the major facilitator superfamily. TsgA family.

It is found in the cell inner membrane. The chain is Protein TsgA from Salmonella gallinarum (strain 287/91 / NCTC 13346).